Reading from the N-terminus, the 492-residue chain is MIPENTGPAAVIVLAAGAGTRMKSRTPKILHEIGGRSMVGHALLAARSIEPRQLAIVVRHERDLVAGHVAELDPSAAIVDQDEVPGTGRAVEVALQALDAKEELTGTVVVTYGDVPLLSGGLLAELVATHEREANAVTVLTAVLDDATGYGRILRGEDGTVTGIREHKDSTDEERLIREVNSGIYAFDAAVLREALGKVTTDNAQGEKYLTDVLGLAREAGGRVAAVVTADRWQVEGANDRVQLAALGAELNRRTVEAWMRAGVTVVDPSTTWIDSSVTLDEDVRLLPNTQLHGSTSVARDAVVGPDTTLTDVEVGEGATVIRTHGSGSVIGPRAAVGPFTYLRPGTVLGEKGKIGAFYETKNVTIGRGSKLSHLGYAGDAEIGEDTNIGCGNITANYDGEKKHRTVIGSGVRTGSNTVFVAPVTVGDGAYSGAGAVIRKDVPAGALALSIAAQRNTEGWVPANRPGSRSAELAQAAINNSSSTPASTEEGK.

Positions 1–241 are pyrophosphorylase; that stretch reads MIPENTGPAA…RWQVEGANDR (241 aa). Residues 14–17, Lys28, Gln81, 86–87, 112–114, Gly151, Glu166, Asn181, and Asn239 contribute to the UDP-N-acetyl-alpha-D-glucosamine site; these read LAAG, GT, and YGD. Asp114 lines the Mg(2+) pocket. A Mg(2+)-binding site is contributed by Asn239. The interval 242–262 is linker; sequence VQLAALGAELNRRTVEAWMRA. Positions 263–492 are N-acetyltransferase; it reads GVTVVDPSTT…STPASTEEGK (230 aa). 2 residues coordinate UDP-N-acetyl-alpha-D-glucosamine: Arg344 and Lys362. His374 serves as the catalytic Proton acceptor. UDP-N-acetyl-alpha-D-glucosamine is bound by residues Tyr377 and Asn388. Acetyl-CoA-binding positions include 397 to 398, Ser416, and Ala434; that span reads NY. A disordered region spans residues 460 to 492; that stretch reads WVPANRPGSRSAELAQAAINNSSSTPASTEEGK. The segment covering 477-492 has biased composition (polar residues); the sequence is AINNSSSTPASTEEGK.

The protein in the N-terminal section; belongs to the N-acetylglucosamine-1-phosphate uridyltransferase family. In the C-terminal section; belongs to the transferase hexapeptide repeat family. Homotrimer. It depends on Mg(2+) as a cofactor.

It localises to the cytoplasm. The enzyme catalyses alpha-D-glucosamine 1-phosphate + acetyl-CoA = N-acetyl-alpha-D-glucosamine 1-phosphate + CoA + H(+). The catalysed reaction is N-acetyl-alpha-D-glucosamine 1-phosphate + UTP + H(+) = UDP-N-acetyl-alpha-D-glucosamine + diphosphate. It functions in the pathway nucleotide-sugar biosynthesis; UDP-N-acetyl-alpha-D-glucosamine biosynthesis; N-acetyl-alpha-D-glucosamine 1-phosphate from alpha-D-glucosamine 6-phosphate (route II): step 2/2. It participates in nucleotide-sugar biosynthesis; UDP-N-acetyl-alpha-D-glucosamine biosynthesis; UDP-N-acetyl-alpha-D-glucosamine from N-acetyl-alpha-D-glucosamine 1-phosphate: step 1/1. The protein operates within bacterial outer membrane biogenesis; LPS lipid A biosynthesis. In terms of biological role, catalyzes the last two sequential reactions in the de novo biosynthetic pathway for UDP-N-acetylglucosamine (UDP-GlcNAc). The C-terminal domain catalyzes the transfer of acetyl group from acetyl coenzyme A to glucosamine-1-phosphate (GlcN-1-P) to produce N-acetylglucosamine-1-phosphate (GlcNAc-1-P), which is converted into UDP-GlcNAc by the transfer of uridine 5-monophosphate (from uridine 5-triphosphate), a reaction catalyzed by the N-terminal domain. The protein is Bifunctional protein GlmU of Pseudarthrobacter chlorophenolicus (strain ATCC 700700 / DSM 12829 / CIP 107037 / JCM 12360 / KCTC 9906 / NCIMB 13794 / A6) (Arthrobacter chlorophenolicus).